Reading from the N-terminus, the 373-residue chain is L-threonine 3-dehydrogenase, mitochondrial (373 aa).

NAD(+) is bound by residues 62–67, 88–90, 106–107, Tyr-195, Lys-199, and Ile-225; these read GGLGQL, DIR, and NI. Tyr-195 (proton donor/acceptor) is an active-site residue.

This sequence belongs to the NAD(P)-dependent epimerase/dehydratase family. As to quaternary structure, homodimer.

It localises to the mitochondrion. It catalyses the reaction L-threonine + NAD(+) = (2S)-2-amino-3-oxobutanoate + NADH + H(+). The protein operates within amino-acid degradation; L-threonine degradation via oxydo-reductase pathway; glycine from L-threonine: step 1/2. Its function is as follows. Catalyzes the NAD(+)-dependent oxidation of L-threonine to 2-amino-3-ketobutyrate, mediating L-threonine catabolism. The chain is L-threonine 3-dehydrogenase, mitochondrial from Mus musculus (Mouse).